The chain runs to 240 residues: Vacuolar-sorting protein SNF7 (240 aa).

Threonine 72 carries the post-translational modification Phosphothreonine. Phosphoserine is present on residues serine 119 and serine 193. The disordered stretch occupies residues 193–240 (SENKVSLPSVPSNKIKQSENSVKDGEEEEDEEDEDEKALRELQAEMGL). The segment covering 195–212 (NKVSLPSVPSNKIKQSEN) has biased composition (polar residues). Residues 217–228 (GEEEEDEEDEDE) are compositionally biased toward acidic residues. Residue lysine 229 forms a Glycyl lysine isopeptide (Lys-Gly) (interchain with G-Cter in ubiquitin) linkage. Basic and acidic residues predominate over residues 229–240 (KALRELQAEMGL).

Belongs to the SNF7 family. As to quaternary structure, core component of the ESCRT-III complex (endosomal sorting required for transport complex III). ESCRT-III appears to be sequentially assembled as a flat lattice on the endosome membrane and forms a transient 450 kDa complex that contains DID4, oligomerized SNF7, VPS20 and VPS24. SNF7 polymerizes into spirals at the surface of lipid bilayers. SNF7 polymerization is nucleated by association of SNF7 with VPS20; the process is terminated through association of VPS24, possibly by capping the SNF7 filament. Interacts with VTA1; the interaction requires DID2. Interacts with BRO1. Interacts with DOA4. Interacts with HEH1 and HEH2. Interacts with RIM20 and YGR122W.

The protein localises to the cytoplasm. Its subcellular location is the endosome membrane. It is found in the nucleus envelope. In terms of biological role, acts a component of the ESCRT-III complex required for the sorting and concentration of proteins resulting in the entry of these proteins into the invaginating vesicles of the multivesicular body (MVB). The sequential action of ESCRT-0, -I, and -II together with the ordered assembly of ESCRT-III links membrane invagination to cargo sorting. Membrane scission in the neck of the growing vesicle releases mature, cargo-laden ILVs into the lumen. ESCRT-III is critical for late steps in MVB sorting, such as membrane invagination and final cargo sorting and recruitment of late-acting components of the sorting machinery. SNF7 is the most abundant ESCRT-III subunit which forms membrane-sculpting filaments with 30 Angstrom periodicity and a exposed cationic membrane-binding surface. Its activation requires a prominent conformational rearrangement to expose protein-membrane and protein-protein interfaces. SNF7 filaments then form spirals that could function as spiral springs. The elastic expansion of compressed SNF7 spirals generates an area difference between the two sides of the membrane and thus curvature which could be the origin of membrane deformation leading eventually to fission. SNF7 recruits BRO1, which in turn recruits DOA4, which deubiquitinates cargos before their enclosure within MVB vesicles. ESCRT-III is also recruited to the nuclear envelope (NE) by integral INM proteins to surveil and clear defective nuclear pore complex (NPC) assembly intermediates to ensure the fidelity of NPC assembly. In Saccharomyces cerevisiae (strain ATCC 204508 / S288c) (Baker's yeast), this protein is Vacuolar-sorting protein SNF7.